Here is a 350-residue protein sequence, read N- to C-terminus: Cilia- and flagella-associated protein 36 (350 aa).

Positions Ser-142–Met-167 form a coiled coil. 2 disordered regions span residues Gly-171 to Ala-233 and Arg-301 to Lys-337. A compositionally biased stretch (polar residues) spans Leu-177–Gln-220. The stretch at Val-280–Lys-350 forms a coiled coil.

It belongs to the CFAP36 family.

The protein localises to the nucleus. Its subcellular location is the cytoplasm. It localises to the cell projection. The protein resides in the cilium. It is found in the flagellum. The sequence is that of Cilia- and flagella-associated protein 36 from Danio rerio (Zebrafish).